We begin with the raw amino-acid sequence, 358 residues long: E3 ubiquitin-protein ligase SIS3 (358 aa).

The N-terminal stretch at 1-27 (MAMRGVDFKWYDGFFLSMLATSVIIVA) is a signal peptide. The next 3 membrane-spanning stretches (helical) occupy residues 40–60 (LHIWIVVDYTTVFIFRVFMFV), 85–105 (VVVLSVLSLLLYPFLWAWTVI), and 125–145 (GFLIWLMFSYCGLLCIAFICV). Residues 235 to 276 (CLICLEEFHIGHEVRGLPCAHNFHVECIDQWLRLNVKCPRCR) form an RING-type; atypical zinc finger. A disordered region spans residues 336–358 (TALETAENGGVPPVLTDLSPSRR).

Expressed in roots, stems, leaves, flowers and siliques.

The protein localises to the membrane. The catalysed reaction is S-ubiquitinyl-[E2 ubiquitin-conjugating enzyme]-L-cysteine + [acceptor protein]-L-lysine = [E2 ubiquitin-conjugating enzyme]-L-cysteine + N(6)-ubiquitinyl-[acceptor protein]-L-lysine.. It functions in the pathway protein modification; protein ubiquitination. Functionally, E3 ubiquitin protein ligase that acts as a positive regulator of sugar signaling during early seedling development. Possesses E3 ligase activity in vitro. This is E3 ubiquitin-protein ligase SIS3 (SIS3) from Arabidopsis thaliana (Mouse-ear cress).